A 661-amino-acid chain; its full sequence is mRNA 3'-end-processing protein RNA14 (661 aa).

The tract at residues 1 to 37 (MSGNETPDAGTVKSVSPSSGGSSLPARPTLRERDPND) is disordered. A compositionally biased stretch (low complexity) spans 14–23 (SVSPSSGGSS). 7 HAT repeats span residues 67-99 (QQVAEIREVFGQLHELFPLESFLWTIHLNWELE), 101-135 (EESGQVETLLAKCLSGELMNNDIYLWSTYLGYVRR), 149-181 (TVLKAYELVMEKCAVFEPRSMQFWQDYLQFLEQ), 192-225 (SRVEILRKLYKRLLCLPVESLERYWEKYTQWEQE), 262-298 (SLPTKLNQATQQNLPAPGQYDEYQLQIWTKWIQWELD), 307-339 (VLRQRVEYVHRQAVQHMCFAPEIWYNYAMFVDE), and 513-548 (YNLDQLKEIYKKVINYESKFGNLNNVYELERRFFEK).

The protein localises to the nucleus. The protein resides in the cytoplasm. Its function is as follows. Component of the cleavage factor IA (CFIA) complex, which is involved in the endonucleolytic cleavage during polyadenylation-dependent pre-mRNA 3'-end formation. In Eremothecium gossypii (strain ATCC 10895 / CBS 109.51 / FGSC 9923 / NRRL Y-1056) (Yeast), this protein is mRNA 3'-end-processing protein RNA14 (RNA14).